We begin with the raw amino-acid sequence, 433 residues long: LanC-like protein GCL1 (433 aa).

The tract at residues 1–22 (MSSSVDFVTEQGRCGDDGNGAG) is disordered.

It belongs to the LanC-like protein family.

Its function is as follows. May play a role in signaling. May be not involved in abscisic acid (ABA) signaling. This chain is LanC-like protein GCL1 (GCL1), found in Arabidopsis thaliana (Mouse-ear cress).